The primary structure comprises 259 residues: 4-hydroxy-tetrahydrodipicolinate reductase (259 aa).

NAD(+)-binding positions include 8–13 (GFAGAM), 94–96 (GTT), and 120–123 (APNF). His150 serves as the catalytic Proton donor/acceptor. His151 lines the (S)-2,3,4,5-tetrahydrodipicolinate pocket. The Proton donor role is filled by Lys154. (S)-2,3,4,5-tetrahydrodipicolinate is bound at residue 160–161 (GT).

It belongs to the DapB family.

It is found in the cytoplasm. The catalysed reaction is (S)-2,3,4,5-tetrahydrodipicolinate + NAD(+) + H2O = (2S,4S)-4-hydroxy-2,3,4,5-tetrahydrodipicolinate + NADH + H(+). The enzyme catalyses (S)-2,3,4,5-tetrahydrodipicolinate + NADP(+) + H2O = (2S,4S)-4-hydroxy-2,3,4,5-tetrahydrodipicolinate + NADPH + H(+). The protein operates within amino-acid biosynthesis; L-lysine biosynthesis via DAP pathway; (S)-tetrahydrodipicolinate from L-aspartate: step 4/4. Functionally, catalyzes the conversion of 4-hydroxy-tetrahydrodipicolinate (HTPA) to tetrahydrodipicolinate. In Limosilactobacillus fermentum (strain NBRC 3956 / LMG 18251) (Lactobacillus fermentum), this protein is 4-hydroxy-tetrahydrodipicolinate reductase.